The chain runs to 449 residues: Monoacylglycerol lipase (449 aa).

Lys82 participates in a covalent cross-link: Glycyl lysine isopeptide (Lys-Gly) (interchain with G-Cter in ubiquitin). One can recognise an AB hydrolase-1 domain in the interval 151-392; it reads PMLIILHGLT…LLLETSTGGH (242 aa). The GXSXG motif lies at 230 to 234; that stretch reads GFSLG. The active-site Nucleophile is Ser232. Residues Asp364 and His392 each act as charge relay system in the active site.

It belongs to the AB hydrolase superfamily. AB hydrolase 4 family.

The catalysed reaction is Hydrolyzes glycerol monoesters of long-chain fatty acids.. The enzyme catalyses 1-hexadecanoylglycerol + H2O = glycerol + hexadecanoate + H(+). It catalyses the reaction 1-octadecanoylglycerol + H2O = octadecanoate + glycerol + H(+). It carries out the reaction 1-(9Z-octadecenoyl)-glycerol + H2O = glycerol + (9Z)-octadecenoate + H(+). Converts monoacylglycerides (MAG) to free fatty acids and glycerol. Has a preference for palmitoyl-MAG. Does not play a significant role in ethyl ester biosynthesis. Also possesses ester hydrolase and low but persistent TAG lipase activity. The protein is Monoacylglycerol lipase of Saccharomyces cerevisiae (strain ATCC 204508 / S288c) (Baker's yeast).